Here is a 43-residue protein sequence, read N- to C-terminus: Protein PsbN (43 aa).

The helical transmembrane segment at Thr-5–Phe-27 threads the bilayer.

The protein belongs to the PsbN family.

It is found in the plastid. Its subcellular location is the chloroplast thylakoid membrane. May play a role in photosystem I and II biogenesis. The sequence is that of Protein PsbN from Mesostigma viride (Green alga).